The following is a 419-amino-acid chain: S-adenosylmethionine synthase (419 aa).

Histidine 15 contributes to the ATP binding site. Aspartate 17 contacts Mg(2+). Glutamate 43 contributes to the K(+) binding site. Residues glutamate 56 and glutamine 99 each coordinate L-methionine. The flexible loop stretch occupies residues 99 to 109 (QSPEIAQGVSC). ATP is bound by residues 173-175 (DGK), 253-254 (RF), aspartate 262, 268-269 (RK), alanine 285, and lysine 289. L-methionine is bound at residue aspartate 262. Lysine 293 contacts L-methionine.

It belongs to the AdoMet synthase family. In terms of assembly, homotetramer; dimer of dimers. Mg(2+) serves as cofactor. It depends on K(+) as a cofactor.

It localises to the cytoplasm. It carries out the reaction L-methionine + ATP + H2O = S-adenosyl-L-methionine + phosphate + diphosphate. Its pathway is amino-acid biosynthesis; S-adenosyl-L-methionine biosynthesis; S-adenosyl-L-methionine from L-methionine: step 1/1. Catalyzes the formation of S-adenosylmethionine (AdoMet) from methionine and ATP. The overall synthetic reaction is composed of two sequential steps, AdoMet formation and the subsequent tripolyphosphate hydrolysis which occurs prior to release of AdoMet from the enzyme. This Gloeobacter violaceus (strain ATCC 29082 / PCC 7421) protein is S-adenosylmethionine synthase.